A 27-amino-acid chain; its full sequence is Phospholipase A2 1 (27 aa).

The protein belongs to the phospholipase A2 family. Group I subfamily. The cofactor is Ca(2+). Expressed by the venom gland.

It localises to the secreted. It catalyses the reaction a 1,2-diacyl-sn-glycero-3-phosphocholine + H2O = a 1-acyl-sn-glycero-3-phosphocholine + a fatty acid + H(+). Its function is as follows. Snake venom phospholipase A2 (PLA2) that inhibits neuromuscular transmission by blocking acetylcholine release from the nerve termini. PLA2 catalyzes the calcium-dependent hydrolysis of the 2-acyl groups in 3-sn-phosphoglycerides. This Micrurus nigrocinctus (Central American coral snake) protein is Phospholipase A2 1.